We begin with the raw amino-acid sequence, 478 residues long: Major facilitator superfamily domain-containing protein 12 (478 aa).

Position 1 is an N-acetylmethionine (methionine 1). Topologically, residues 1–26 (MVPGSPAAGAGPAPRALSLAARLSYA) are cytoplasmic. Residues 27–47 (VGHFLNDLCASMWFTYLLLYL) form a helical membrane-spanning segment. At 48-56 (HSVRAYSSR) the chain is on the lumenal side. A helical transmembrane segment spans residues 57-77 (GAGLLLLLGQVADGLCTPLVG). Residues 78-97 (YEADRAAGRCARCGPRKAWH) lie on the Cytoplasmic side of the membrane. The chain crosses the membrane as a helical span at residues 98 to 118 (LVGTVCVLLSFPFIFSPCLGC). Residues 119–124 (GAATPE) lie on the Lumenal side of the membrane. The helical transmembrane segment at 125–145 (WAALLYYGPFIVVFQFGWAAT) threads the bilayer. The Cytoplasmic portion of the chain corresponds to 146–168 (QIAHLSLIPELVTSDHEKVELTA). A helical transmembrane segment spans residues 169–189 (LRYAFTVVANITVFGAAWLLL). At 190–216 (RLQGSAREGPPDEAGDHLGVQDVPVFR) the chain is on the lumenal side. The chain crosses the membrane as a helical span at residues 217–237 (TLSLCVVGVGAVFSLLFHLGT). The Cytoplasmic portion of the chain corresponds to 238–277 (RERRRPPAQEPDERSPLLAPATARPLLLWKHWLREPSFYQ). A helical transmembrane segment spans residues 278–300 (VGLLYMSTRLIVNLSQTYIAMYL). Over 301–308 (TYSLNLPK) the chain is Lumenal. The helical transmembrane segment at 309-329 (KFIATIPLVMYVSGFCSSFLM) threads the bilayer. Residues 330-338 (KPVNKCIGR) lie on the Cytoplasmic side of the membrane. A helical transmembrane segment spans residues 339 to 359 (NMTYFVGLLVILAFAAWVVLV). Over 360-361 (DE) the chain is Lumenal. A helical transmembrane segment spans residues 362–382 (LGMAVYVAAVLLGGGCATILV). Residues 383–400 (TSLAMTADLIGPHTHSGA) lie on the Cytoplasmic side of the membrane. The helical transmembrane segment at 401 to 421 (FVYGAMSFSDKVANGLAVMVI) threads the bilayer. The Lumenal portion of the chain corresponds to 422 to 436 (QSLHPCSLELCCRAC). A helical membrane pass occupies residues 437–457 (VGFYHWVMVAVTGGVGVAATL). Over 458-478 (SLCSLLVWPIRLRSWDPGAQP) the chain is Cytoplasmic.

Belongs to the major facilitator superfamily.

The protein resides in the melanosome membrane. Its subcellular location is the lysosome membrane. The enzyme catalyses L-cysteine(in) = L-cysteine(out). Functionally, transporter that mediates the import of cysteine into melanosomes, thereby regulating skin/hair pigmentation. In melanosomes, cysteine import is required both for normal levels of cystine, the oxidized dimer of cysteine, and provide cysteine for the production of the cysteinyldopas used in pheomelanin synthesis, thereby regulating skin/hair pigmentation. Also catalyzes import of cysteine into lysosomes in non-pigmented cells, regulating lysosomal cystine and cysteine storage, which is essnetial for redox homeostasis. The polypeptide is Major facilitator superfamily domain-containing protein 12 (Equus caballus (Horse)).